A 159-amino-acid polypeptide reads, in one-letter code: Small ribosomal subunit protein uS4 (159 aa).

An S4 RNA-binding domain is found at arginine 106–isoleucine 158.

The protein belongs to the universal ribosomal protein uS4 family. As to quaternary structure, part of the 30S ribosomal subunit. Contacts protein S5. The interaction surface between S4 and S5 is involved in control of translational fidelity.

Its function is as follows. One of the primary rRNA binding proteins, it binds directly to 16S rRNA where it nucleates assembly of the body of the 30S subunit. Functionally, with S5 and S12 plays an important role in translational accuracy. In Pyrobaculum neutrophilum (strain DSM 2338 / JCM 9278 / NBRC 100436 / V24Sta) (Thermoproteus neutrophilus), this protein is Small ribosomal subunit protein uS4.